The primary structure comprises 550 residues: Arginine--tRNA ligase (550 aa).

The 'HIGH' region motif lies at 130-140 (ANPTGPIHIGG).

Belongs to the class-I aminoacyl-tRNA synthetase family. In terms of assembly, monomer.

The protein localises to the cytoplasm. The catalysed reaction is tRNA(Arg) + L-arginine + ATP = L-arginyl-tRNA(Arg) + AMP + diphosphate. The sequence is that of Arginine--tRNA ligase (argS) from Mycobacterium leprae (strain TN).